Reading from the N-terminus, the 154-residue chain is Ribonuclease H (154 aa).

In terms of domain architecture, RNase H type-1 spans 1–142 (MLKHIDLYTD…CDELARDAAS (142 aa)). Mg(2+) contacts are provided by D10, E48, D70, and D134. Residues 126-147 (GHPENERCDELARDAASGKELA) are compositionally biased toward basic and acidic residues. The disordered stretch occupies residues 126–154 (GHPENERCDELARDAASGKELAEDTGYQP).

Belongs to the RNase H family. As to quaternary structure, monomer. Mg(2+) serves as cofactor.

Its subcellular location is the cytoplasm. It catalyses the reaction Endonucleolytic cleavage to 5'-phosphomonoester.. Endonuclease that specifically degrades the RNA of RNA-DNA hybrids. In Aeromonas salmonicida (strain A449), this protein is Ribonuclease H.